Consider the following 167-residue polypeptide: uncharacterized protein (167 aa).

A helical transmembrane segment spans residues 4 to 24 (IIGLFFIIILIVINISILAYD).

It localises to the membrane. This is an uncharacterized protein from Rickettsia prowazekii (strain Madrid E).